Reading from the N-terminus, the 78-residue chain is Acyl carrier protein (78 aa).

Residues 2 to 77 enclose the Carrier domain; it reads STIEERVKKI…AAIDFINANQ (76 aa). At Ser-37 the chain carries O-(pantetheine 4'-phosphoryl)serine.

The protein belongs to the acyl carrier protein (ACP) family. In terms of processing, 4'-phosphopantetheine is transferred from CoA to a specific serine of apo-ACP by AcpS. This modification is essential for activity because fatty acids are bound in thioester linkage to the sulfhydryl of the prosthetic group.

The protein localises to the cytoplasm. The protein operates within lipid metabolism; fatty acid biosynthesis. Functionally, carrier of the growing fatty acid chain in fatty acid biosynthesis. This is Acyl carrier protein from Yersinia pseudotuberculosis serotype O:1b (strain IP 31758).